We begin with the raw amino-acid sequence, 96 residues long: Co-chaperonin GroES (96 aa).

It belongs to the GroES chaperonin family. As to quaternary structure, heptamer of 7 subunits arranged in a ring. Interacts with the chaperonin GroEL.

It is found in the cytoplasm. Functionally, together with the chaperonin GroEL, plays an essential role in assisting protein folding. The GroEL-GroES system forms a nano-cage that allows encapsulation of the non-native substrate proteins and provides a physical environment optimized to promote and accelerate protein folding. GroES binds to the apical surface of the GroEL ring, thereby capping the opening of the GroEL channel. This Coxiella burnetii (strain Dugway 5J108-111) protein is Co-chaperonin GroES.